Here is a 363-residue protein sequence, read N- to C-terminus: Phosphate acyltransferase (363 aa).

A disordered region spans residues 326 to 363 (ADSHPSKVNAGENAPPLASASNPSPEALPVGSLDRVEG). A compositionally biased stretch (low complexity) spans 337 to 354 (ENAPPLASASNPSPEALP).

Belongs to the PlsX family. Homodimer. Probably interacts with PlsY.

It is found in the cytoplasm. It catalyses the reaction a fatty acyl-[ACP] + phosphate = an acyl phosphate + holo-[ACP]. Its pathway is lipid metabolism; phospholipid metabolism. Its function is as follows. Catalyzes the reversible formation of acyl-phosphate (acyl-PO(4)) from acyl-[acyl-carrier-protein] (acyl-ACP). This enzyme utilizes acyl-ACP as fatty acyl donor, but not acyl-CoA. The protein is Phosphate acyltransferase of Synechococcus sp. (strain JA-3-3Ab) (Cyanobacteria bacterium Yellowstone A-Prime).